The sequence spans 357 residues: Protein RecA (357 aa).

71–78 (GPESSGKT) contacts ATP.

It belongs to the RecA family.

It localises to the cytoplasm. Its function is as follows. Can catalyze the hydrolysis of ATP in the presence of single-stranded DNA, the ATP-dependent uptake of single-stranded DNA by duplex DNA, and the ATP-dependent hybridization of homologous single-stranded DNAs. It interacts with LexA causing its activation and leading to its autocatalytic cleavage. This is Protein RecA from Ehrlichia ruminantium (strain Gardel).